Here is a 414-residue protein sequence, read N- to C-terminus: Serine hydroxymethyltransferase (414 aa).

(6S)-5,6,7,8-tetrahydrofolate is bound by residues leucine 116 and 120–122 (GHL). Lysine 224 is modified (N6-(pyridoxal phosphate)lysine). (6S)-5,6,7,8-tetrahydrofolate contacts are provided by residues glutamate 240 and 348–350 (SPF).

It belongs to the SHMT family. Homodimer. The cofactor is pyridoxal 5'-phosphate.

It localises to the cytoplasm. It carries out the reaction (6R)-5,10-methylene-5,6,7,8-tetrahydrofolate + glycine + H2O = (6S)-5,6,7,8-tetrahydrofolate + L-serine. It functions in the pathway one-carbon metabolism; tetrahydrofolate interconversion. Its pathway is amino-acid biosynthesis; glycine biosynthesis; glycine from L-serine: step 1/1. Functionally, catalyzes the reversible interconversion of serine and glycine with tetrahydrofolate (THF) serving as the one-carbon carrier. This reaction serves as the major source of one-carbon groups required for the biosynthesis of purines, thymidylate, methionine, and other important biomolecules. Also exhibits THF-independent aldolase activity toward beta-hydroxyamino acids, producing glycine and aldehydes, via a retro-aldol mechanism. In Campylobacter jejuni subsp. jejuni serotype O:23/36 (strain 81-176), this protein is Serine hydroxymethyltransferase.